We begin with the raw amino-acid sequence, 85 residues long: Large ribosomal subunit protein bL27 (85 aa).

The disordered stretch occupies residues 1-21 (MAHKKAAGSSRNGRDSESKRL).

It belongs to the bacterial ribosomal protein bL27 family.

The chain is Large ribosomal subunit protein bL27 from Chromohalobacter salexigens (strain ATCC BAA-138 / DSM 3043 / CIP 106854 / NCIMB 13768 / 1H11).